Reading from the N-terminus, the 23-residue chain is Caerin-4.3 (23 aa).

In terms of tissue distribution, expressed by the skin parotoid and/or rostral glands.

Its subcellular location is the secreted. Antibacterial peptide, that adopts an alpha helical conformation which can disrupt bacterial membranes. Each caerin displays a different antimicrobial specificity. The sequence is that of Caerin-4.3 from Ranoidea caerulea (Green tree frog).